The chain runs to 512 residues: GMP synthase [glutamine-hydrolyzing] (512 aa).

A Glutamine amidotransferase type-1 domain is found at 3–196 (NILILDFGSQ…VKHICQTSET (194 aa)). The active-site Nucleophile is the Cys-80. Active-site residues include His-169 and Glu-171. The GMPS ATP-PPase domain maps to 197-387 (WKIETIEKQL…LGLPDVLISR (191 aa)). 225–231 (SGGVDSS) contacts ATP.

In terms of assembly, homodimer.

The catalysed reaction is XMP + L-glutamine + ATP + H2O = GMP + L-glutamate + AMP + diphosphate + 2 H(+). It functions in the pathway purine metabolism; GMP biosynthesis; GMP from XMP (L-Gln route): step 1/1. Functionally, catalyzes the synthesis of GMP from XMP. In Chlamydia muridarum (strain MoPn / Nigg), this protein is GMP synthase [glutamine-hydrolyzing] (guaA).